We begin with the raw amino-acid sequence, 425 residues long: Light-independent protochlorophyllide reductase subunit N (425 aa).

[4Fe-4S] cluster-binding residues include cysteine 17, cysteine 42, and cysteine 103.

This sequence belongs to the BchN/ChlN family. In terms of assembly, protochlorophyllide reductase is composed of three subunits; ChlL, ChlN and ChlB. Forms a heterotetramer of two ChlB and two ChlN subunits. [4Fe-4S] cluster serves as cofactor.

The catalysed reaction is chlorophyllide a + oxidized 2[4Fe-4S]-[ferredoxin] + 2 ADP + 2 phosphate = protochlorophyllide a + reduced 2[4Fe-4S]-[ferredoxin] + 2 ATP + 2 H2O. The protein operates within porphyrin-containing compound metabolism; chlorophyll biosynthesis (light-independent). Component of the dark-operative protochlorophyllide reductase (DPOR) that uses Mg-ATP and reduced ferredoxin to reduce ring D of protochlorophyllide (Pchlide) to form chlorophyllide a (Chlide). This reaction is light-independent. The NB-protein (ChlN-ChlB) is the catalytic component of the complex. This chain is Light-independent protochlorophyllide reductase subunit N, found in Parasynechococcus marenigrum (strain WH8102).